Reading from the N-terminus, the 213-residue chain is Ras-related protein Rab-25 (213 aa).

9 residues coordinate GTP: serine 21, glycine 24, lysine 25, threonine 26, asparagine 27, serine 38, histidine 39, threonine 43, and threonine 44. Position 26 (threonine 26) interacts with Mg(2+). 2 short sequence motifs (switch) span residues 35-49 and 67-84; these read NEFS…GVEF and DTAG…YYRG. Residues threonine 44 and aspartate 67 each coordinate Mg(2+). Glycine 70, asparagine 125, lysine 126, aspartate 128, alanine 156, and leucine 157 together coordinate GTP. Residues cysteine 209 and cysteine 210 are each lipidated (S-geranylgeranyl cysteine). Cysteine 210 is modified (cysteine methyl ester). The propeptide at 211 to 213 is removed in mature form; sequence ISL.

Belongs to the small GTPase superfamily. Rab family. As to quaternary structure, interacts (GTP-bound form) with RAB11FIP1, RAB11FIP2, RAB11FIP3 and RAB11FIP4. Interacts (via the hypervariable C-terminal region) with ITGB1 (via the cytoplasmic region); the interaction is GTP-dependent. Interacts with ITGAV. Associates with the integrin alpha-V/beta-1 heterodimer. Interacts with VPS33B. The cofactor is Mg(2+). In terms of tissue distribution, expression is restricted to epithelial cells. Expressed in ovarian epithelium (NOE) and breast tissue. Expressed in ovarian cancer; expression is increased relative to NOE cells. Expression in ovarian cancer is stage dependent, with stage III and stage IV showing higher levels than early stage cancers. Expressed in breast cancer; expression is increased relative to normal breast tissue.

The protein localises to the cell membrane. The protein resides in the cytoplasmic vesicle. It is found in the cell projection. It localises to the pseudopodium membrane. It carries out the reaction GTP + H2O = GDP + phosphate + H(+). With respect to regulation, regulated by guanine nucleotide exchange factors (GEFs) which promote the exchange of bound GDP for free GTP. Regulated by GTPase activating proteins (GAPs) which increase the GTP hydrolysis activity. Inhibited by GDP dissociation inhibitors (GDIs) which prevent Rab-GDP dissociation. The small GTPases Rab are key regulators of intracellular membrane trafficking, from the formation of transport vesicles to their fusion with membranes. Rabs cycle between an inactive GDP-bound form and an active GTP-bound form that is able to recruit to membranes different set of downstream effectors directly responsible for vesicle formation, movement, tethering and fusion. RAB25 regulates epithelial cell differentiation, proliferation and survival, thereby playing key roles in tumorigenesis. Promotes invasive migration of cells in which it functions to localize and maintain integrin alpha-V/beta-1 at the tips of extending pseudopodia. Involved in the regulation of epithelial morphogenesis through the control of CLDN4 expression and localization at tight junctions. May selectively regulate the apical recycling pathway. Together with MYO5B regulates transcytosis. In Homo sapiens (Human), this protein is Ras-related protein Rab-25.